The following is a 303-amino-acid chain: mRNA-capping enzyme subunit beta (303 aa).

It belongs to the fungal TPase family. In terms of assembly, heterodimer. The mRNA-capping enzyme is composed of two separate chains alpha and beta, respectively a mRNA guanylyltransferase and an mRNA 5'-triphosphate monophosphatase. Mg(2+) serves as cofactor.

It localises to the nucleus. The catalysed reaction is a 5'-end triphospho-ribonucleoside in mRNA + H2O = a 5'-end diphospho-ribonucleoside in mRNA + phosphate + H(+). Functionally, first step of mRNA capping. Converts the 5'-triphosphate end of a nascent mRNA chain into a diphosphate end. The protein is mRNA-capping enzyme subunit beta (pct1) of Schizosaccharomyces pombe (strain 972 / ATCC 24843) (Fission yeast).